A 411-amino-acid chain; its full sequence is Putative nickel insertion protein (411 aa).

The protein belongs to the LarC family.

The protein is Putative nickel insertion protein of Acaryochloris marina (strain MBIC 11017).